The following is a 316-amino-acid chain: Cell division protein ZipA (316 aa).

The Periplasmic segment spans residues 1–5 (MQELR). Residues 6–26 (FVLIVVGALAIAALLFHGLWS) form a helical membrane-spanning segment. Residues 27-316 (SKKEGKAKFG…QIVEFNAANA (290 aa)) are Cytoplasmic-facing. The interval 36 to 65 (GNKPLGKLDVDQGDKDSVEQERSFAPATED) is disordered. The segment covering 41–57 (GKLDVDQGDKDSVEQER) has biased composition (basic and acidic residues).

The protein belongs to the ZipA family. Interacts with FtsZ via their C-terminal domains.

The protein resides in the cell inner membrane. In terms of biological role, essential cell division protein that stabilizes the FtsZ protofilaments by cross-linking them and that serves as a cytoplasmic membrane anchor for the Z ring. Also required for the recruitment to the septal ring of downstream cell division proteins. In Vibrio parahaemolyticus serotype O3:K6 (strain RIMD 2210633), this protein is Cell division protein ZipA.